A 75-amino-acid polypeptide reads, in one-letter code: Small ribosomal subunit protein bS18c (75 aa).

Belongs to the bacterial ribosomal protein bS18 family. As to quaternary structure, part of the 30S ribosomal subunit.

The protein localises to the plastid. It localises to the chloroplast. This chain is Small ribosomal subunit protein bS18c (rps18), found in Anthoceros angustus (Hornwort).